The primary structure comprises 370 residues: MTEFIPPGTRFHALPSPFPFKRGGALHGARVAYETWGTLAADASNAILIVTGLSPDAHAAANDANPAAGWWEGMVGPGKAIDTDRWFVVCVNSLGSCRGSTGPASLNPATGQPYRLDFPELSIEDGARAAIEVVRAQGIEQLACVVGNSMGGMTALAVLMLHPGIARSHVNISGSAQALPFSIAIRSLQREAIRLDPRWNGGHYDDDAYPESGMRMARKLGVITYRSALEWDGRFGRVRLDSDQTDDDPFGLEFQVESYLEGHARRFVRFFDPNCYLYLSRSMDWFDLAEYADGDVLAGLAKIRVEKALAIGANTDILFPVQQQQQVADGLRAGGADARFIGLESPQGHDAFLVDFERFCPAVRGFLDAL.

An AB hydrolase-1 domain is found at 46 to 355 (AILIVTGLSP…PQGHDAFLVD (310 aa)). Positions 52–55 (GLSP) are important for substrate specificity. Serine 149 serves as the catalytic Nucleophile. Residue arginine 218 participates in substrate binding. Active-site residues include aspartate 316 and histidine 349. Substrate is bound at residue aspartate 350.

It belongs to the AB hydrolase superfamily. MetX family. In terms of assembly, homodimer.

Its subcellular location is the cytoplasm. The enzyme catalyses succinyl-CoA + L-serine = O-succinyl-L-serine + CoA. It carries out the reaction L-homoserine + succinyl-CoA = O-succinyl-L-homoserine + CoA. Its pathway is amino-acid biosynthesis; L-cysteine biosynthesis; L-cysteine from L-serine: step 1/2. Its function is as follows. Transfers a succinyl group from succinyl-CoA to L-serine, forming succinyl-L-serine. In vitro, also has homoserine succinyl transferase activity. This Stenotrophomonas maltophilia (Pseudomonas maltophilia) protein is Serine O-succinyltransferase.